The sequence spans 291 residues: MLVPWAPIAATSVVAAAASSYYFSNMAISNDAKTATLKGDDQWVDLKLKSSKDLSHNTKALIFELPTPDSTLGLTTASALLTKYVTPKGSNVVRPYTPVSDPDSKGEFELVVKSYPEGKMSKHIHELKEGDTLSFKGPIIKYQWQPNLHKEITLIGAGTGITPLYQLISAINKNPEDKTKVNLFYGNATEGDILLKDEIDAIAKAKPQQFNVHYFLDKPSDNWKGENGFISEEFIKGNSPAADSDNVKVFVCGPPPFYKAISGAKVSPTDQGEVDGALKNLGFNKDQVFKF.

The chain crosses the membrane as a helical span at residues 7 to 23; it reads PIAATSVVAAAASSYYF. Residues 41–145 enclose the FAD-binding FR-type domain; the sequence is DQWVDLKLKS…KGPIIKYQWQ (105 aa). 148 to 183 provides a ligand contact to FAD; the sequence is LHKEITLIGAGTGITPLYQLISAINKNPEDKTKVNL.

The protein belongs to the flavoprotein pyridine nucleotide cytochrome reductase family. The cofactor is FAD.

It is found in the mitochondrion outer membrane. The catalysed reaction is 2 Fe(III)-[cytochrome b5] + NADH = 2 Fe(II)-[cytochrome b5] + NAD(+) + H(+). May mediate the reduction of outer membrane cytochrome b5. The polypeptide is NADH-cytochrome b5 reductase 2 (MCR1) (Yarrowia lipolytica (strain CLIB 122 / E 150) (Yeast)).